The following is a 201-amino-acid chain: 3-isopropylmalate dehydratase small subunit (201 aa).

Belongs to the LeuD family. LeuD type 1 subfamily. Heterodimer of LeuC and LeuD.

It catalyses the reaction (2R,3S)-3-isopropylmalate = (2S)-2-isopropylmalate. The protein operates within amino-acid biosynthesis; L-leucine biosynthesis; L-leucine from 3-methyl-2-oxobutanoate: step 2/4. Catalyzes the isomerization between 2-isopropylmalate and 3-isopropylmalate, via the formation of 2-isopropylmaleate. The polypeptide is 3-isopropylmalate dehydratase small subunit (Thermus thermophilus (strain ATCC BAA-163 / DSM 7039 / HB27)).